A 143-amino-acid polypeptide reads, in one-letter code: Heat shock protein Hsp-16.41 (143 aa).

One can recognise a sHSP domain in the interval 35–140; it reads HNSFNFSDNI…SSRSIPINFV (106 aa).

It belongs to the small heat shock protein (HSP20) family.

This is Heat shock protein Hsp-16.41 (hsp-16.41) from Caenorhabditis elegans.